The following is a 472-amino-acid chain: SURF6 homolog gldi-11 (472 aa).

Disordered regions lie at residues 53 to 73 (LSKK…AKGL), 89 to 232 (KSKQ…SPEI), 249 to 350 (KVER…DRAL), and 414 to 472 (LVKK…GRIL). Residues 95 to 106 (KVQPQKVVAPVK) are compositionally biased toward low complexity. Residues 107–132 (RPADQNKNKEKVVKKDQKKQDKKADS) are compositionally biased toward basic and acidic residues. Acidic residues predominate over residues 133–150 (DSEEDDSSDDEEKEETDE). Positions 151-160 (PVAKKQKKEE) are enriched in basic and acidic residues. 2 stretches are compositionally biased toward acidic residues: residues 161–175 (SSDD…EEPE) and 182–194 (EAED…EEEE). Polar residues predominate over residues 197-210 (SKPNKTVAQSTLKS). The span at 212–221 (GKIDKEIQKL) shows a compositional bias: basic and acidic residues. Residues 274–285 (LKRRESKLKLKQ) show a composition bias toward basic residues. Over residues 286–305 (RRAEEKKGKEAAAQVKKETV) the composition is skewed to basic and acidic residues. A compositionally biased stretch (basic residues) spans 414–426 (LVKKNKMKDRRKQ). Residues 427–443 (KWENRENKTEGEKQTKQ) show a composition bias toward basic and acidic residues. Basic residues predominate over residues 459-472 (KRKMNKLRNKGRIL).

This sequence belongs to the SURF6 family.

It localises to the nucleus. The protein resides in the nucleoplasm. Binds to both DNA and RNA in vitro, with a stronger binding capacity for RNA. May represent a nucleolar constitutive protein involved in ribosomal biosynthesis or assembly. The polypeptide is SURF6 homolog gldi-11 (Caenorhabditis elegans).